An 80-amino-acid chain; its full sequence is Exodeoxyribonuclease 7 small subunit (80 aa).

This sequence belongs to the XseB family. Heterooligomer composed of large and small subunits.

The protein localises to the cytoplasm. It carries out the reaction Exonucleolytic cleavage in either 5'- to 3'- or 3'- to 5'-direction to yield nucleoside 5'-phosphates.. Functionally, bidirectionally degrades single-stranded DNA into large acid-insoluble oligonucleotides, which are then degraded further into small acid-soluble oligonucleotides. This is Exodeoxyribonuclease 7 small subunit from Oleidesulfovibrio alaskensis (strain ATCC BAA-1058 / DSM 17464 / G20) (Desulfovibrio alaskensis).